The sequence spans 199 residues: Transgelin-2 (199 aa).

The residue at position 2 (Ala2) is an N-acetylalanine. Residue Ser11 is modified to Phosphoserine. N6-acetyllysine occurs at positions 17 and 20. The region spanning 24–136 (ADLEQILIQW…RTLMNLGGLA (113 aa)) is the Calponin-homology (CH) domain. Position 163 is a phosphoserine (Ser163). Lys171 participates in a covalent cross-link: Glycyl lysine isopeptide (Lys-Gly) (interchain with G-Cter in SUMO2). The Calponin-like repeat unit spans residues 174-199 (IGLQMGTNRGASQAGMTGYGMPRQIL). Phosphothreonine is present on Thr180. An omega-N-methylarginine mark is found at Arg182 and Arg196.

It belongs to the calponin family.

In Mus musculus (Mouse), this protein is Transgelin-2 (Tagln2).